Here is a 712-residue protein sequence, read N- to C-terminus: Satratoxin biosynthesis SC3 cluster transcription factor SAT20 (712 aa).

Polar residues-rich tracts occupy residues 1 to 10 (MPNLPGSSDS), 25 to 36 (CSSTKPNAAQEN), 131 to 145 (SEPS…WPSL), and 269 to 282 (SLPS…SSTG). Disordered regions lie at residues 1–43 (MPNL…ELAQ), 115–145 (SQNA…WPSL), and 264–294 (PVSG…KADR). Positions 306 to 339 (CFRCRMYKENCDPGLPCKNCMRVQVTRRTFFGPC) form a DNA-binding region, zn(2)-C6 fungal-type. A coiled-coil region spans residues 530–560 (QIQIMVAQVMLDKQKNALKRLQERALSKNRH).

The protein resides in the nucleus. Functionally, transcriptional regulator that may regulate the expression of the satratoxin biosynthesis SC3 cluster, one of the 3 clusters involved in the biosynthesis of satratoxins, trichothecene mycotoxins that are associated with human food poisonings. This is Satratoxin biosynthesis SC3 cluster transcription factor SAT20 from Stachybotrys chartarum (strain CBS 109288 / IBT 7711) (Toxic black mold).